Reading from the N-terminus, the 450-residue chain is MREIISIHIGQAGIQVGNACWELYCLEHGIEPDGTMPSDTSVGVAHDAFNTFFSETGSGKHVPRAIFVDLEPTVIDEVRTGSYRQLFHPEQLISGKEDAANNFARGHYTVGKEIVDLCLDRVRKLADNCTGLQGFLVFNAVGGGTGSGLGSLLLERLSVDYGKKSKLGFTIYPSPQVSTAVVEPYNSVLSTHSLLEHTDVAVLLDNEAIYDICRRSLDIERPTYTNLNRLISQIISSLTTSLRFDGAINVDVTEFQTNLVPYPRIHFMLSSYAPVISAEKAYHEQLSVPEITNAVFEPSSMMAKCDPRHGKYMACCLMYRGDVVPKDVNAAVATIKTKRTVQFVDWCPTGFKCGINYQPPSVVPGGDLAKVQRAVCMISNNTAVAEVFSRIDHKFDLMYAKRAFVHWYVGEGMEEGEFSEAREDLAALEKDYEEVGAEGADDEGDEGDDY.

GTP-binding residues include Gln-11, Glu-71, Gly-144, Thr-145, Thr-179, Asn-206, and Asn-228. Glu-71 lines the Mg(2+) pocket. Residue Glu-254 is part of the active site.

Belongs to the tubulin family. As to quaternary structure, dimer of alpha and beta chains. A typical microtubule is a hollow water-filled tube with an outer diameter of 25 nm and an inner diameter of 15 nM. Alpha-beta heterodimers associate head-to-tail to form protofilaments running lengthwise along the microtubule wall with the beta-tubulin subunit facing the microtubule plus end conferring a structural polarity. Microtubules usually have 13 protofilaments but different protofilament numbers can be found in some organisms and specialized cells. It depends on Mg(2+) as a cofactor. In terms of processing, undergoes a tyrosination/detyrosination cycle, the cyclic removal and re-addition of a C-terminal tyrosine residue by the enzymes tubulin tyrosine carboxypeptidase (TTCP) and tubulin tyrosine ligase (TTL), respectively.

The protein resides in the cytoplasm. Its subcellular location is the cytoskeleton. The catalysed reaction is GTP + H2O = GDP + phosphate + H(+). Functionally, tubulin is the major constituent of microtubules, a cylinder consisting of laterally associated linear protofilaments composed of alpha- and beta-tubulin heterodimers. Microtubules grow by the addition of GTP-tubulin dimers to the microtubule end, where a stabilizing cap forms. Below the cap, tubulin dimers are in GDP-bound state, owing to GTPase activity of alpha-tubulin. This chain is Tubulin alpha-6 chain (TUBA6), found in Zea mays (Maize).